The following is a 516-amino-acid chain: Tyrosine decarboxylase 3 (516 aa).

Lysine 319 carries the N6-(pyridoxal phosphate)lysine modification.

This sequence belongs to the group II decarboxylase family. As to quaternary structure, homodimer. Pyridoxal 5'-phosphate serves as cofactor.

The enzyme catalyses L-tyrosine + H(+) = tyramine + CO2. The protein is Tyrosine decarboxylase 3 (TYRDC-3) of Petroselinum crispum (Parsley).